A 192-amino-acid polypeptide reads, in one-letter code: Thiol-disulfide oxidoreductase ResA (192 aa).

A helical; Signal-anchor for type II membrane protein membrane pass occupies residues 22–41 (SSILLILVAAVVFAIVSNMK). In terms of domain architecture, Thioredoxin spans 47–189 (YRVGDAAPDF…LEGYLNDIAP (143 aa)). Residues C89 and C92 are joined by a disulfide bond.

The protein belongs to the thioredoxin family. ResA subfamily.

The protein localises to the cell membrane. Its pathway is protein modification; cytochrome c assembly. Functionally, thiol-disulfide oxidoreductase which is required in disulfide reduction during c-type cytochrome synthesis. May accept reducing equivalents from CcdA, leading to breakage of disulfide bonds in apocytochrome c; following this reduction heme can be covalently attached. The polypeptide is Thiol-disulfide oxidoreductase ResA (Oceanobacillus iheyensis (strain DSM 14371 / CIP 107618 / JCM 11309 / KCTC 3954 / HTE831)).